The sequence spans 218 residues: Ras-related protein RABA1i (218 aa).

GTP is bound at residue 20 to 27 (GDSGVGKS). Residues 42-50 (SRATIGVEF) carry the Effector region motif. GTP-binding positions include 68–72 (DTAGQ), 126–129 (NKAD), and 156–157 (SA). Residues cysteine 215 and cysteine 216 are each lipidated (S-geranylgeranyl cysteine).

Belongs to the small GTPase superfamily. Rab family.

It is found in the cell membrane. Functionally, intracellular vesicle trafficking and protein transport. This chain is Ras-related protein RABA1i (RABA1I), found in Arabidopsis thaliana (Mouse-ear cress).